Consider the following 158-residue polypeptide: Large ribosomal subunit protein uL16 (158 aa).

The protein belongs to the universal ribosomal protein uL16 family. Part of the 50S ribosomal subunit.

Functionally, binds 23S rRNA and is also seen to make contacts with the A and possibly P site tRNAs. In Parasynechococcus marenigrum (strain WH8102), this protein is Large ribosomal subunit protein uL16.